The primary structure comprises 331 residues: Centriolar satellite-associated tubulin polyglutamylase complex regulator 1 (331 aa).

A required for interaction with PCM1 region spans residues 1–111 (MLSPERLALP…HCLLQLLCPD (111 aa)). Residues 1–225 (MLSPERLALP…SCPPPALVKE (225 aa)) are required for interaction with TPGS1, LRRC49, and TTLL1. A required for interaction with TPGS2 region spans residues 112–331 (FPLELTQKAA…STEETDESET (220 aa)). Positions 292 to 331 (SCLPSRTPPRVGSPWKPLHRSRKLDAESDGSTEETDESET) are disordered. Over residues 318-331 (ESDGSTEETDESET) the composition is skewed to acidic residues. S319 is subject to Phosphoserine.

It belongs to the CSTPP1 family. Interacts with PCM1. Interacts with TTLL1, TPGS1, TPGS2 and LRRC49; the interactions link CSTPP1 to the complex TPGC. Binds to alpha-tubulin.

The protein resides in the cytoplasm. It localises to the cytoskeleton. Its subcellular location is the microtubule organizing center. It is found in the centrosome. The protein localises to the centriolar satellite. Regulator of the tubulin polyglutamylase complex (TPGC) that controls cytoskeletal organization, nuclear shape, and cilium disassembly by balancing microtubule and actin assembly. Regulates the assembly and stability of the TPGC and thereby modulates polyglutamylation of the microtubule, which antagonizes MAP4 binding. This Rattus norvegicus (Rat) protein is Centriolar satellite-associated tubulin polyglutamylase complex regulator 1 (Cstpp1).